A 111-amino-acid chain; its full sequence is Resistin-like beta (111 aa).

Residues 1–23 (MGPSSCLLLILIPLLQLINPGST) form the signal peptide. Cystine bridges form between C55–C108, C67–C107, C76–C93, C78–C95, and C82–C97.

The protein belongs to the resistin/FIZZ family. Homodimer; disulfide-linked. Expressed only in the gastrointestinal tract, particularly the colon.

The protein localises to the secreted. Its function is as follows. Probable hormone. The polypeptide is Resistin-like beta (RETNLB) (Homo sapiens (Human)).